The following is a 159-amino-acid chain: ATP synthase subunit b 2 (159 aa).

Residues 1–21 traverse the membrane as a helical segment; it reads MDATFWAFIALVIFVVIVVYM.

Belongs to the ATPase B chain family. F-type ATPases have 2 components, F(1) - the catalytic core - and F(0) - the membrane proton channel. F(1) has five subunits: alpha(3), beta(3), gamma(1), delta(1), epsilon(1). F(0) has three main subunits: a(1), b(2) and c(10-14). The alpha and beta chains form an alternating ring which encloses part of the gamma chain. F(1) is attached to F(0) by a central stalk formed by the gamma and epsilon chains, while a peripheral stalk is formed by the delta and b chains.

Its subcellular location is the cell inner membrane. Functionally, f(1)F(0) ATP synthase produces ATP from ADP in the presence of a proton or sodium gradient. F-type ATPases consist of two structural domains, F(1) containing the extramembraneous catalytic core and F(0) containing the membrane proton channel, linked together by a central stalk and a peripheral stalk. During catalysis, ATP synthesis in the catalytic domain of F(1) is coupled via a rotary mechanism of the central stalk subunits to proton translocation. Its function is as follows. Component of the F(0) channel, it forms part of the peripheral stalk, linking F(1) to F(0). This Brucella canis (strain ATCC 23365 / NCTC 10854 / RM-666) protein is ATP synthase subunit b 2.